Consider the following 846-residue polypeptide: FNIP repeat-containing protein DDB_G0289381 (846 aa).

Residues 1 to 11 (MKLLSFKKKPS) show a composition bias toward basic residues. The segment at 1–39 (MKLLSFKKKPSLTKSQSCPDKLKNLKEQQKDPKNGANYD) is disordered. Residues 20–33 (DKLKNLKEQQKDPK) show a composition bias toward basic and acidic residues. FNIP repeat units follow at residues 159 to 193 (IPNH…FGEK), 194 to 239 (FNQV…FGNN), 240 to 283 (FDQI…FQEN), and 284 to 325 (FNQP…YGGD). The disordered stretch occupies residues 362–384 (SSISLDISGGGSGSGSGVNSTTT). FNIP repeat units follow at residues 458 to 500 (FQQL…FGDG), 501 to 546 (FNQQ…FGKS), and 654 to 693 (FNQS…MFNK). Residues 702–734 (SNNNNENNNENNNENNNENNNENNNENNNNTNS) are disordered. Positions 702–734 (SNNNNENNNENNNENNNENNNENNNENNNNTNS) form a coiled coil.

The chain is FNIP repeat-containing protein DDB_G0289381 from Dictyostelium discoideum (Social amoeba).